The primary structure comprises 383 residues: UDP-N-acetylglucosamine--N-acetylmuramyl-(pentapeptide) pyrophosphoryl-undecaprenol N-acetylglucosamine transferase (383 aa).

UDP-N-acetyl-alpha-D-glucosamine-binding positions include 10 to 12 (TGG), asparagine 124, arginine 165, serine 190, isoleucine 245, and glutamine 290. A disordered region spans residues 364-383 (PFGQAREPGQKPARPPDLAS).

It belongs to the glycosyltransferase 28 family. MurG subfamily.

It is found in the cell inner membrane. It carries out the reaction di-trans,octa-cis-undecaprenyl diphospho-N-acetyl-alpha-D-muramoyl-L-alanyl-D-glutamyl-meso-2,6-diaminopimeloyl-D-alanyl-D-alanine + UDP-N-acetyl-alpha-D-glucosamine = di-trans,octa-cis-undecaprenyl diphospho-[N-acetyl-alpha-D-glucosaminyl-(1-&gt;4)]-N-acetyl-alpha-D-muramoyl-L-alanyl-D-glutamyl-meso-2,6-diaminopimeloyl-D-alanyl-D-alanine + UDP + H(+). The protein operates within cell wall biogenesis; peptidoglycan biosynthesis. Functionally, cell wall formation. Catalyzes the transfer of a GlcNAc subunit on undecaprenyl-pyrophosphoryl-MurNAc-pentapeptide (lipid intermediate I) to form undecaprenyl-pyrophosphoryl-MurNAc-(pentapeptide)GlcNAc (lipid intermediate II). The chain is UDP-N-acetylglucosamine--N-acetylmuramyl-(pentapeptide) pyrophosphoryl-undecaprenol N-acetylglucosamine transferase from Anaeromyxobacter sp. (strain K).